The primary structure comprises 549 residues: Neurofilament light polypeptide (549 aa).

Position 2 is an N-acetylserine (Ser-2). Residues 2-92 (SSFYSEPYYS…KSIRTQEKAQ (91 aa)) form a head region. Residue Thr-21 is glycosylated (O-linked (GlcNAc) threonine). Arg-23 is subject to Asymmetric dimethylarginine; alternate. Arg-23 carries the post-translational modification Omega-N-methylarginine; alternate. The O-linked (GlcNAc) serine glycan is linked to Ser-27. The residue at position 30 (Arg-30) is an Omega-N-methylarginine. A Phosphotyrosine modification is found at Tyr-43. A phosphoserine mark is found at Ser-56, Ser-66, and Ser-102. One can recognise an IF rod domain in the interval 89–400 (EKAQLQDLND…KLLEGEETRL (312 aa)). The interval 93–124 (LQDLNDRFASFIERVHELEQQNKVLEAQLLVL) is coil 1A. The linker 1 stretch occupies residues 125–137 (RQKHSEPSRFRAL). The interval 138–233 (YEQEIRDLRL…KVHEEEIAEL (96 aa)) is coil 1B. Positions 234–252 (QAQIQYAQISVEMDVSSKP) are linker 12. The tract at residues 253–271 (DLSAALKDIRAQYEKLAAK) is coil 2A. Residues 272–280 (NMQNAEEWF) form a linker 2 region. The coil 2B stretch occupies residues 281–396 (KSRFTVLTES…AAYRKLLEGE (116 aa)). The interval 381–391 (ALDIEIAAYRK) is epitope; recognized by IF-specific monoclonal antibody. The interval 397 to 443 (ETRLSFTSVGSLTTGYSQSSQVFGRSAYGGLQTSSYLMSTRSFPSYY) is tail, subdomain A. A tail region spans residues 397-549 (ETRLSFTSVG…GEEQATKKKD (153 aa)). A tail, subdomain B (acidic) region spans residues 444-549 (TSHVQEEQIE…GEEQATKKKD (106 aa)). A disordered region spans residues 462–549 (KAEEAKDEPP…GEEQATKKKD (88 aa)). Residues 471–534 (PSEGEAEEEG…ETKEAEEEEK (64 aa)) are compositionally biased toward acidic residues. Ser-472 is subject to Phosphoserine. Thr-526 is modified (phosphothreonine). The segment covering 535–549 (KDEGAGEEQATKKKD) has biased composition (basic and acidic residues).

This sequence belongs to the intermediate filament family. As to quaternary structure, forms homodimers (in vitro). Forms heterodimers with NEFH or NEFM; which can further hetero-oligomerize (in vitro). Forms heterodimers with INA (in vitro). Interacts with ARHGEF28. Interacts with TRIM2. O-glycosylated. Post-translationally, phosphorylated in the head and rod regions by the PKC kinase PKN1, leading to the inhibition of polymerization. In terms of processing, ubiquitinated in the presence of TRIM2 and UBE2D1.

The protein localises to the cell projection. The protein resides in the axon. It is found in the cytoplasm. It localises to the cytoskeleton. Its function is as follows. Neurofilaments usually contain three intermediate filament proteins: NEFL, NEFM, and NEFH which are involved in the maintenance of neuronal caliber. May additionally cooperate with the neuronal intermediate filament proteins PRPH and INA to form neuronal filamentous networks. The protein is Neurofilament light polypeptide (NEFL) of Sus scrofa (Pig).